Consider the following 157-residue polypeptide: Putative low molecular weight protein-tyrosine-phosphatase slr0328 (157 aa).

The active-site Nucleophile is the Cys7. The active site involves Arg13. The Proton donor role is filled by Asp124.

It belongs to the low molecular weight phosphotyrosine protein phosphatase family.

It carries out the reaction O-phospho-L-tyrosyl-[protein] + H2O = L-tyrosyl-[protein] + phosphate. The polypeptide is Putative low molecular weight protein-tyrosine-phosphatase slr0328 (Synechocystis sp. (strain ATCC 27184 / PCC 6803 / Kazusa)).